The sequence spans 984 residues: E3 ubiquitin-protein ligase BRE1A (984 aa).

The interval M1 to T34 is disordered. Residues T43–L90 are a coiled coil. Residues V128–E150 form a disordered region. Basic and acidic residues predominate over residues N139–E150. Coiled coils occupy residues A236–T378 and S429–K907. The interval S506–A632 is disordered. The segment covering R514–T526 has biased composition (polar residues). Basic and acidic residues-rich tracts occupy residues E527–P540 and S558–A632. The segment at C931 to N970 adopts an RING-type zinc-finger fold.

This sequence belongs to the BRE1 family. As to quaternary structure, component of the RNF20/40 complex (also known as BRE1 complex).

It is found in the nucleus. The enzyme catalyses S-ubiquitinyl-[E2 ubiquitin-conjugating enzyme]-L-cysteine + [acceptor protein]-L-lysine = [E2 ubiquitin-conjugating enzyme]-L-cysteine + N(6)-ubiquitinyl-[acceptor protein]-L-lysine.. The protein operates within protein modification; protein ubiquitination. Component of the RNF20/40 E3 ubiquitin-protein ligase complex that mediates monoubiquitination of 'Lys-120' of histone H2B (H2BK120ub1). H2BK120ub1 gives a specific tag for epigenetic transcriptional activation and is also prerequisite for histone H3 'Lys-4' and 'Lys-79' methylation (H3K4me and H3K79me, respectively). This chain is E3 ubiquitin-protein ligase BRE1A (RNF20), found in Gallus gallus (Chicken).